The primary structure comprises 336 residues: UPF0324 membrane protein BT_1919 (336 aa).

8 helical membrane-spanning segments follow: residues Leu-2–Gly-19, Phe-23–Ser-45, Ile-85–Leu-107, Ile-117–Leu-134, Thr-147–Tyr-169, Ala-210–Val-232, Trp-253–Val-275, and Phe-310–Thr-332.

Belongs to the UPF0324 family.

The protein localises to the cell membrane. The protein is UPF0324 membrane protein BT_1919 of Bacteroides thetaiotaomicron (strain ATCC 29148 / DSM 2079 / JCM 5827 / CCUG 10774 / NCTC 10582 / VPI-5482 / E50).